Here is a 239-residue protein sequence, read N- to C-terminus: DNA repair protein RecO (239 aa).

Belongs to the RecO family.

Its function is as follows. Involved in DNA repair and RecF pathway recombination. This is DNA repair protein RecO from Tolumonas auensis (strain DSM 9187 / NBRC 110442 / TA 4).